The chain runs to 805 residues: Probable phosphoketolase (805 aa).

The protein belongs to the XFP family. Thiamine diphosphate is required as a cofactor.

The polypeptide is Probable phosphoketolase (Synechocystis sp. (strain ATCC 27184 / PCC 6803 / Kazusa)).